Reading from the N-terminus, the 36-residue chain is MKIIKLITIFTMMATLMXXVANGEPIPPNAVKSLQG.

Residues 1–23 (MKIIKLITIFTMMATLMXXVANG) form the signal peptide. A propeptide spanning residues 24 to 25 (EP) is cleaved from the precursor. Gln-35 carries the glutamine amide modification.

As to expression, expressed by the venom gland.

The protein resides in the secreted. Functionally, venom protein with unknown function. Does not induce paralysis when a high dose is administered by intrathoracic injection into the blowfly Lucilia caesar. This Tetramorium bicarinatum (Tramp ant) protein is U14-myrmicitoxin-Tb1a.